The sequence spans 489 residues: MKPIKALSVASEIFPLIKTGGLADVTGALPGALKPHGITLRTLVPGYPTVIAGIEAALPVHVFPALFGGPARLLAARKGDVELFVLDAPHLYKRPGNPYASPDGRDWPDNAQRFAALARAAAEIGQGLVPAFVPDIVHAHDWQAGLTAAYLRYSDKPAPATVFTVHNLAFQGQFPRELLGTLGLPPSSFGVDGVEYYGAIGYMKAGLQLSDRITTVSPAYALEIQAPEAGMGLDGLLRQRSHHLTGILNGIDEKVWNPATDKRIAATYDVKTLPARGANKAALRERFGLASETDRLLIGVISRLSWQKGLDLLLETLPLLLSEGIQLALLGAGDAALEAAFRQVAQSHPGQIGVVVGYDEDLAHLIQAGADALLVPSRFEPCGLTQLCALRYGAVPVVARVGGLSDTVVDANEMAIAAGVATGVQFSPVTRDMLAAALIKTHGLYSDRTTWQALQQNGMRSDVSWRNPAQHYAQLYRNLLAARSPHLAM.

ADP-alpha-D-glucose is bound at residue Lys-18.

This sequence belongs to the glycosyltransferase 1 family. Bacterial/plant glycogen synthase subfamily.

It catalyses the reaction [(1-&gt;4)-alpha-D-glucosyl](n) + ADP-alpha-D-glucose = [(1-&gt;4)-alpha-D-glucosyl](n+1) + ADP + H(+). The protein operates within glycan biosynthesis; glycogen biosynthesis. Functionally, synthesizes alpha-1,4-glucan chains using ADP-glucose. The chain is Glycogen synthase from Rhodopseudomonas palustris (strain BisA53).